Here is a 574-residue protein sequence, read N- to C-terminus: Interleukin-22 receptor subunit alpha-1 (574 aa).

The signal sequence occupies residues M1–A15. At H16–T228 the chain is on the extracellular side. 2 Fibronectin type-III domains span residues A17–P124 and P141–T221. C71 and C79 are joined by a disulfide. 2 N-linked (GlcNAc...) asparagine glycosylation sites follow: N80 and N172. The cysteines at positions 128 and 217 are disulfide-linked. Residues Y229 to L249 form a helical membrane-spanning segment. Residues S250 to S574 lie on the Cytoplasmic side of the membrane. Disordered regions lie at residues S388–C440, A454–P489, and H507–D560. Phosphoserine is present on residues S410 and S414.

Belongs to the type II cytokine receptor family. In terms of assembly, heterodimer with IL10RB and with IL20RB. IL22 binding to heterodimer is greater than binding to IL22RA1 alone. Interacts with FBXW12; the interaction promotes ubiquitination of IL22RA1. In terms of processing, ubiquitinated. As to expression, expressed in colon, liver, lung, pancreas and kidney. No expression in immune cells such as monocytes, T-cells, and NK-cells. Expressed in keratinocytes of normal skin as well as in psoriatic skin lesion. Detected in normal blood brain barrier endothelial cells as well as in multiple sclerosis lesions; Strongly expressed on central nervous system vessels within infiltrated multiple sclerosis lesions. Overexpressed in synovial fluid cells from rheumatoid arthritis and spondyloarthropathy patients.

It localises to the cell membrane. Functionally, component of the receptor for IL20, IL22 and IL24. Component of IL22 receptor formed by IL22RA1 and IL10RB enabling IL22 signaling via JAK/STAT pathways. IL22 also induces activation of MAPK1/MAPK3 and Akt kinases pathways. Component of one of the receptor for IL20 and IL24 formed by IL22RA1 and IL20RB also signaling through STATs activation. Mediates IL24 antiangiogenic activity as well as IL24 inhibitory effect on endothelial cell tube formation and differentiation. This chain is Interleukin-22 receptor subunit alpha-1 (IL22RA1), found in Homo sapiens (Human).